The chain runs to 892 residues: Putative disease resistance protein At4g10780 (892 aa).

Residues 24-63 (SLGNYIHKLKDNIVALEKAIEDLTATRDDVLRRVQMEEGK) adopt a coiled-coil conformation. The NB-ARC domain maps to 137–440 (IVAAPAPKLE…ICEGFIDGNI (304 aa)). 180–187 (GMGGVGKT) serves as a coordination point for ATP. 6 LRR repeats span residues 515-536 (AVRR…PECP), 537-559 (ELTT…FFRH), 562-584 (KLVV…ISEL), 586-608 (ALRY…QDLK), 609-631 (TLIH…SKLS), and 632-654 (SLRT…KELH).

The protein belongs to the disease resistance NB-LRR family.

Its function is as follows. Potential disease resistance protein. The polypeptide is Putative disease resistance protein At4g10780 (Arabidopsis thaliana (Mouse-ear cress)).